Reading from the N-terminus, the 155-residue chain is Large ribosomal subunit protein uL22c (155 aa).

It belongs to the universal ribosomal protein uL22 family. Part of the 50S ribosomal subunit.

It localises to the plastid. Its subcellular location is the chloroplast. Its function is as follows. This protein binds specifically to 23S rRNA. Functionally, the globular domain of the protein is located near the polypeptide exit tunnel on the outside of the subunit, while an extended beta-hairpin is found that lines the wall of the exit tunnel in the center of the 70S ribosome. The sequence is that of Large ribosomal subunit protein uL22c (rpl22) from Solanum tuberosum (Potato).